Consider the following 345-residue polypeptide: Carbamoyl phosphate synthase small chain (345 aa).

A CPSase region spans residues 1–169 (MKKYLVMEDG…FVKGEEGGTV (169 aa)). L-glutamine contacts are provided by Ser-45, Gly-213, and Gly-215. The 178-residue stretch at 168–345 (TVLFIDLGSK…GEMKRRIGYA (178 aa)) folds into the Glutamine amidotransferase type-1 domain. The Nucleophile role is filled by Cys-242. Positions 243, 246, 282, 284, and 285 each coordinate L-glutamine. Catalysis depends on residues His-321 and Glu-323.

Belongs to the CarA family. Composed of two chains; the small (or glutamine) chain promotes the hydrolysis of glutamine to ammonia, which is used by the large (or ammonia) chain to synthesize carbamoyl phosphate. Tetramer of heterodimers (alpha,beta)4.

It carries out the reaction hydrogencarbonate + L-glutamine + 2 ATP + H2O = carbamoyl phosphate + L-glutamate + 2 ADP + phosphate + 2 H(+). The enzyme catalyses L-glutamine + H2O = L-glutamate + NH4(+). It functions in the pathway amino-acid biosynthesis; L-arginine biosynthesis; carbamoyl phosphate from bicarbonate: step 1/1. It participates in pyrimidine metabolism; UMP biosynthesis via de novo pathway; (S)-dihydroorotate from bicarbonate: step 1/3. In terms of biological role, small subunit of the glutamine-dependent carbamoyl phosphate synthetase (CPSase). CPSase catalyzes the formation of carbamoyl phosphate from the ammonia moiety of glutamine, carbonate, and phosphate donated by ATP, constituting the first step of 2 biosynthetic pathways, one leading to arginine and/or urea and the other to pyrimidine nucleotides. The small subunit (glutamine amidotransferase) binds and cleaves glutamine to supply the large subunit with the substrate ammonia. The protein is Carbamoyl phosphate synthase small chain of Thermoplasma volcanium (strain ATCC 51530 / DSM 4299 / JCM 9571 / NBRC 15438 / GSS1).